The chain runs to 553 residues: MAAAVAIEEQKKDIIFRSKLPDIYIPKNLPLHSYCFENISKFSSRPCLINGATDEIFTYADVELISRRVGSGLSKLGIKQGDTIMILLPNSPEFVFAFLGASFIGSISTMANPFFTSTEVIKQAKASNAKLIITQGCYVDKVKDYACENGVKIISIDTTTTADDAANILHFSELTGADENEMPKVEISPDGVVALPYSSGTTGLPKGVMLTHKGLVTSVAQQVDGENPNLYMHSDDVLLCVLPLFHIYSLNSVLLCGLRAGSGILIMQKFEIVPFLELIQKYKVTIGPFVPPIVLAIAKSTVVDNYDLSSVRTVMSGAAPLGKELEDAVRAKFPNAKLGQGYGMTEAGPVLAMCLAFAKEPFDIKSGACGTVVRNAEMKIVDPETGSSLPRNHPGEICIRGDQIMKGYLNDPEATARTIDKEGWLHTGDIGYIDDDDELFIVDRLKELIKYKGFQVAPAELEALLLTHPCISDAAVVPMKDEAAGEVPVAFVVKSNGHNITEDEIKQFISKQVIFYKRINRVFFVEAIPKAPSGKILRKDLRARLAAAALPTN.

ATP contacts are provided by serine 198, serine 199, glycine 200, threonine 201, threonine 202, and lysine 206. Residues tyrosine 248 and serine 252 each coordinate (E)-4-coumaroyl-AMP. Lysine 269 contacts CoA. Positions 271–340 (EIVPFLELIQ…AKFPNAKLGQ (70 aa)) are SBD1. Positions 318, 340, 341, 345, and 353 each coordinate (E)-4-coumaroyl-AMP. Glutamine 340, glycine 341, and threonine 345 together coordinate ATP. Residues 341–408 (GYGMTEAGPV…IRGDQIMKGY (68 aa)) are SBD2. ATP contacts are provided by aspartate 429 and arginine 444. Residues lysine 446 and lysine 450 each contribute to the (E)-4-coumaroyl-AMP site. Positions 452 and 453 each coordinate CoA. Lysine 535 serves as a coordination point for ATP.

Belongs to the ATP-dependent AMP-binding enzyme family. Mg(2+) serves as cofactor.

The catalysed reaction is (E)-4-coumarate + ATP + CoA = (E)-4-coumaroyl-CoA + AMP + diphosphate. It catalyses the reaction (E)-4-coumarate + ATP + H(+) = (E)-4-coumaroyl-AMP + diphosphate. It carries out the reaction (E)-4-coumaroyl-AMP + CoA = (E)-4-coumaroyl-CoA + AMP + H(+). It participates in phytoalexin biosynthesis; 3,4',5-trihydroxystilbene biosynthesis; 3,4',5-trihydroxystilbene from trans-4-coumarate: step 1/2. Its function is as follows. Carboxylate--CoA ligase that may use 4-coumarate as substrate. Follows a two-step reaction mechanism, wherein the carboxylate substrate first undergoes adenylation by ATP, followed by a thioesterification in the presence of CoA to yield the final CoA thioester. The polypeptide is 4-coumarate--CoA ligase (Vanilla planifolia (Vanilla)).